The sequence spans 177 residues: Large ribosomal subunit protein uL6 (177 aa).

This sequence belongs to the universal ribosomal protein uL6 family. Part of the 50S ribosomal subunit.

This protein binds to the 23S rRNA, and is important in its secondary structure. It is located near the subunit interface in the base of the L7/L12 stalk, and near the tRNA binding site of the peptidyltransferase center. In Neisseria gonorrhoeae (strain ATCC 700825 / FA 1090), this protein is Large ribosomal subunit protein uL6.